A 249-amino-acid chain; its full sequence is MKFYKYCASGNDFVITNADRKEDRSALAKELCNRYEGIGADGFIVILPHEKYDFEWEFYNNDGSRAAMCGNGSRAAAHFAHHINKINPNMSFLTGAGVIKAKVNQDKVEVSLGKIKSVQNTFEELGKTWQLCNTGVPHLVHFCQNLDEFDTMLCQKMRQKYNANVNFVKILDENHLKVRTYERGVEDETLACGTGMGACFYLAFLNKKVQNKVKITPKSGEEVGFAYKNEELFFEGKVKYCFEANYNFS.

Residues Asn11 and Asn60 each contribute to the substrate site. Cys69 functions as the Proton donor in the catalytic mechanism. Residues 70–71, Asn164, and 182–183 each bind substrate; these read GN and ER. Catalysis depends on Cys192, which acts as the Proton acceptor. Residue 193 to 194 participates in substrate binding; it reads GT.

Belongs to the diaminopimelate epimerase family. As to quaternary structure, homodimer.

The protein localises to the cytoplasm. The catalysed reaction is (2S,6S)-2,6-diaminopimelate = meso-2,6-diaminopimelate. Its pathway is amino-acid biosynthesis; L-lysine biosynthesis via DAP pathway; DL-2,6-diaminopimelate from LL-2,6-diaminopimelate: step 1/1. Catalyzes the stereoinversion of LL-2,6-diaminopimelate (L,L-DAP) to meso-diaminopimelate (meso-DAP), a precursor of L-lysine and an essential component of the bacterial peptidoglycan. The chain is Diaminopimelate epimerase from Campylobacter jejuni subsp. jejuni serotype O:23/36 (strain 81-176).